The chain runs to 400 residues: MGDWSFLGNILEQVNEQSTVIGRVWLTVLFIFRILILGTAAELVWGDEQSDFVCNTQQPGCENVCYDEAFPISHIRLWVLQIIFVSTPSLVYFGHAVHHVRMEEKRKEREEAERRQQAEVDEEKLPLAPNQNKGNNPDGTKKFRLEGTLLRTYILHIIFKTLFEVGFIVGQYFLYGFRILPLYRCGRWPCPNLVDCFVSRPTEKTIFIMFMLVVAAVSLFLNLVEISHLILKRIRRALRRPAEEQMGEVPEKPLHAIAVSSIPKAKGYKLLEEEKPVSHYFPLTEVGVEPSPLPSAFNEFEEKIGMGPLEDLSRAFDERLPSYAQAKEPEEEKVKAEEEEEQEEEQQAPQEEPGVKKAEEEVVSDEVEGPSAPAELATDVRSLSRLSKASSRARSDDLTV.

The stretch at 2 to 12 is an intramembrane region; it reads GDWSFLGNILE. The Cytoplasmic segment spans residues 13-21; that stretch reads QVNEQSTVI. A helical transmembrane segment spans residues 22 to 42; that stretch reads GRVWLTVLFIFRILILGTAAE. Residues 43–71 lie on the Extracellular side of the membrane; the sequence is LVWGDEQSDFVCNTQQPGCENVCYDEAFP. 3 disulfide bridges follow: cysteine 54-cysteine 196, cysteine 61-cysteine 190, and cysteine 65-cysteine 185. Residues 72–92 traverse the membrane as a helical segment; sequence ISHIRLWVLQIIFVSTPSLVY. Residues 93-156 are Cytoplasmic-facing; sequence FGHAVHHVRM…GTLLRTYILH (64 aa). Basic and acidic residues predominate over residues 104 to 118; it reads EKRKEREEAERRQQA. The tract at residues 104–139 is disordered; it reads EKRKEREEAERRQQAEVDEEKLPLAPNQNKGNNPDG. Positions 129-138 are enriched in polar residues; it reads PNQNKGNNPD. A helical transmembrane segment spans residues 157–177; the sequence is IIFKTLFEVGFIVGQYFLYGF. Over 178–205 the chain is Extracellular; it reads RILPLYRCGRWPCPNLVDCFVSRPTEKT. Residues 206–226 traverse the membrane as a helical segment; sequence IFIMFMLVVAAVSLFLNLVEI. The Cytoplasmic portion of the chain corresponds to 227–400; it reads SHLILKRIRR…SRARSDDLTV (174 aa). Residues 323–400 form a disordered region; the sequence is YAQAKEPEEE…SRARSDDLTV (78 aa). Basic and acidic residues predominate over residues 327–336; sequence KEPEEEKVKA. Residues 337–346 are compositionally biased toward acidic residues; it reads EEEEEQEEEQ. The residue at position 364 (serine 364) is a Phosphoserine; by CK2. Low complexity predominate over residues 381 to 392; sequence RSLSRLSKASSR.

Belongs to the connexin family. Alpha-type (group II) subfamily. A hemichannel or connexon is composed of a hexamer of connexins. A functional gap junction is formed by the apposition of two hemichannels. Forms heteromeric channels with GJA3. During early stages of lens development, interacts with the C-terminus of MIP. Post-translationally, proteolytically cleaved by caspase-3 during lens development. In terms of processing, phosphorylated on Ser-364; which inhibits cleavage by caspase-3.

It is found in the cell membrane. It localises to the cell junction. The protein resides in the gap junction. Functionally, structural component of eye lens gap junctions. Gap junctions are dodecameric channels that connect the cytoplasm of adjoining cells. They are formed by the docking of two hexameric hemichannels, one from each cell membrane. Small molecules and ions diffuse from one cell to a neighboring cell via the central pore. The polypeptide is Gap junction alpha-8 protein (GJA8) (Gallus gallus (Chicken)).